The chain runs to 174 residues: Methionine-R-sulfoxide reductase B2, mitochondrial (174 aa).

The transit peptide at 1-61 directs the protein to the mitochondrion; it reads MARLLRALRG…PEQFYVTREK (61 aa). Positions 62 to 172 constitute a MsrB domain; the sequence is GTEAPFSGMY…NSVALKFKPS (111 aa). Residues cysteine 82, cysteine 85, cysteine 138, and cysteine 141 each coordinate Zn(2+). Residue cysteine 161 is the Nucleophile of the active site.

This sequence belongs to the MsrB Met sulfoxide reductase family. Requires Zn(2+) as cofactor.

It localises to the mitochondrion. The catalysed reaction is L-methionyl-[protein] + [thioredoxin]-disulfide + H2O = L-methionyl-(R)-S-oxide-[protein] + [thioredoxin]-dithiol. It carries out the reaction [thioredoxin]-disulfide + L-methionine + H2O = L-methionine (R)-S-oxide + [thioredoxin]-dithiol. In terms of biological role, methionine-sulfoxide reductase that specifically reduces methionine (R)-sulfoxide back to methionine. While in many cases, methionine oxidation is the result of random oxidation following oxidative stress, methionine oxidation is also a post-translational modification that takes place on specific residue. Upon oxidative stress, may play a role in the preservation of mitochondrial integrity by decreasing the intracellular reactive oxygen species build-up through its scavenging role, hence contributing to cell survival and protein maintenance. In Rattus norvegicus (Rat), this protein is Methionine-R-sulfoxide reductase B2, mitochondrial (Msrb2).